Here is a 607-residue protein sequence, read N- to C-terminus: MFRIEILRCTLSQSHPQRFSRASFLLSTWYSQESVSAADNDDDPVLVKLSVAIRDSYKDPPLEFSSFTDCPSIRKVLPSLSVHHVVDLINHNPLSLPQRSIFAFFKFISSQPGFRFTVETYFVLARFLAVHEMFTEAQSLIELVVSRKGKNSASSVFISLVEMRVTPMCGFLVDALMITYTDLGFIPDAIQCFRLSRKHRFDVPIRGCGNLLDRMMKLNPTGTIWGFYMEILDAGFPLNVYVFNILMNKFCKEGNISDAQKVFDEITKRSLQPTVVSFNTLINGYCKVGNLDEGFRLKHQMEKSRTRPDVFTYSALINALCKENKMDGAHGLFDEMCKRGLIPNDVIFTTLIHGHSRNGEIDLMKESYQKMLSKGLQPDIVLYNTLVNGFCKNGDLVAARNIVDGMIRRGLRPDKITYTTLIDGFCRGGDVETALEIRKEMDQNGIELDRVGFSALVCGMCKEGRVIDAERALREMLRAGIKPDDVTYTMMMDAFCKKGDAQTGFKLLKEMQSDGHVPSVVTYNVLLNGLCKLGQMKNADMLLDAMLNIGVVPDDITYNTLLEGHHRHANSSKRYIQKPEIGIVADLASYKSIVNELDRASKDHRNR.

9 PPR repeats span residues 239 to 273 (NVYVFNILMNKFCKEGNISDAQKVFDEITKRSLQP), 274 to 308 (TVVSFNTLINGYCKVGNLDEGFRLKHQMEKSRTRP), 309 to 343 (DVFTYSALINALCKENKMDGAHGLFDEMCKRGLIP), 344 to 378 (NDVIFTTLIHGHSRNGEIDLMKESYQKMLSKGLQP), 379 to 413 (DIVLYNTLVNGFCKNGDLVAARNIVDGMIRRGLRP), 414 to 448 (DKITYTTLIDGFCRGGDVETALEIRKEMDQNGIEL), 449 to 483 (DRVGFSALVCGMCKEGRVIDAERALREMLRAGIKP), 484 to 518 (DDVTYTMMMDAFCKKGDAQTGFKLLKEMQSDGHVP), and 519 to 553 (SVVTYNVLLNGLCKLGQMKNADMLLDAMLNIGVVP).

It belongs to the PPR family. P subfamily.

The protein is Putative pentatricopeptide repeat-containing protein At1g09680 of Arabidopsis thaliana (Mouse-ear cress).